We begin with the raw amino-acid sequence, 266 residues long: Decarboxylase tropJ (266 aa).

Glu80 functions as the Proton acceptor in the catalytic mechanism. Residues Glu80, His99, His101, and His180 each coordinate Zn(2+).

It belongs to the aldolase class II family. Requires Zn(2+) as cofactor.

It functions in the pathway secondary metabolite biosynthesis. Decarboxylase; part of the gene cluster that mediates the biosynthesis of the tropolone class of fungal maleic anhydrides. The pathway begins with the synthesis of 3-methylorcinaldehyde by the non-reducing polyketide synthase (PKS) tropA. 3-methylorcinaldehyde is the substrate for the FAD-dependent monooxygenase tropB to yield a dearomatized hydroxycyclohexadione. The 2-oxoglutarate-dependent dioxygenase tropC then performs the oxidative ring expansion to provide the first tropolone metabolite stipitaldehyde. Trop D converts stipitaldehyde into stipitacetal which is in turn converted to stipitalide by the short-chain dehydrogenase/reductase tropE. The next steps involve tropF, tropG, tropH, tropI and tropJ to form successive tropolone maleic anhydrides including stipitaldehydic, stipitatonic and stipitatic acids. This Talaromyces stipitatus (strain ATCC 10500 / CBS 375.48 / QM 6759 / NRRL 1006) (Penicillium stipitatum) protein is Decarboxylase tropJ.